Consider the following 278-residue polypeptide: Short-chain dehydrogenase/reductase eupG (278 aa).

NADP(+) contacts are provided by L19, D71, and N98. The active-site Proton donor is S155. Positions 188, 192, and 223 each coordinate NADP(+). Y188 serves as the catalytic Proton acceptor. K192 functions as the Lowers pKa of active site Tyr in the catalytic mechanism.

It belongs to the short-chain dehydrogenases/reductases (SDR) family.

It functions in the pathway secondary metabolite biosynthesis; terpenoid biosynthesis. Short-chain dehydrogenase/reductase; part of the gene cluster that mediates the biosynthesis of eupenifeldin, a bistropolone meroterpenoid that acts as an antitumor agent. The first step of eupenifeldin biosynthesis is the biosynthesis of 3-methylorcinaldehyde performed by the non-reducing polyketide synthase eupA. Oxidative dearomatization of 3-methylorcinaldehyde likely catalyzed by the FAD-dependent monooxygenase eupB is followed by oxidative ring expansion by the 2-oxoglutarate-dependent dioxygenase eupC to provide the first tropolone metabolite, tropolone stipitaldehyde. In parallel, generation of sesquiterpene alpha-humulene from farnesylpyrophosphate (FPP) is catalyzed by the terpene cyclase eupE. The cytochrome P450 monooxygenase eupD then hydroxylates humulene to humulenol. The putative Diels-Alderase eupF probably catalyzes the formation of the tropolone-humulene skeleton by linking humulenol and the polyketide moiety. The short-chain dehydrogenase/reductase eupG and the flavin-dependent monooxygenase eupH are also essential for eupenifeldin biosynthesis and are likely the additional decorating enzymes of the tropolone-humulene skeleton to produce final eupenifeldin or derivatives. This chain is Short-chain dehydrogenase/reductase eupG, found in Phoma sp.